A 382-amino-acid chain; its full sequence is Enoyl-[acyl-carrier-protein] reductase, mitochondrial (382 aa).

The transit peptide at 1–17 (MSSFLSKRFLSFSQRAM) directs the protein to the mitochondrion. Tyrosine 77 functions as the Proton donor in the catalytic mechanism. NADP(+) is bound by residues asparagine 159, 187-190 (TSSV), 210-212 (RDR), 285-288 (YGGM), 310-312 (FWV), and lysine 375.

The protein belongs to the zinc-containing alcohol dehydrogenase family. Quinone oxidoreductase subfamily. In terms of assembly, homodimer.

Its subcellular location is the mitochondrion matrix. The catalysed reaction is a 2,3-saturated acyl-[ACP] + NADP(+) = a (2E)-enoyl-[ACP] + NADPH + H(+). Catalyzes the NADPH-dependent reduction of trans-2-enoyl thioesters in mitochondrial fatty acid synthesis (fatty acid synthesis type II). Fatty acid chain elongation in mitochondria uses acyl carrier protein (ACP) as an acyl group carrier, but the enzyme accepts both ACP and CoA thioesters as substrates in vitro. Required for respiration and the maintenance of the mitochondrial compartment. The chain is Enoyl-[acyl-carrier-protein] reductase, mitochondrial (ETR1) from Kluyveromyces lactis (strain ATCC 8585 / CBS 2359 / DSM 70799 / NBRC 1267 / NRRL Y-1140 / WM37) (Yeast).